The chain runs to 131 residues: 1,4-dihydroxy-2-naphthoyl-CoA hydrolase (131 aa).

D7 is an active-site residue.

It belongs to the 4-hydroxybenzoyl-CoA thioesterase family. DHNA-CoA hydrolase subfamily.

It carries out the reaction 1,4-dihydroxy-2-naphthoyl-CoA + H2O = 1,4-dihydroxy-2-naphthoate + CoA + H(+). The protein operates within cofactor biosynthesis; phylloquinone biosynthesis. It participates in quinol/quinone metabolism; 1,4-dihydroxy-2-naphthoate biosynthesis; 1,4-dihydroxy-2-naphthoate from chorismate: step 7/7. Functionally, catalyzes the hydrolysis of 1,4-dihydroxy-2-naphthoyl-CoA (DHNA-CoA) to 1,4-dihydroxy-2-naphthoate (DHNA), a reaction involved in phylloquinone (vitamin K1) biosynthesis. This chain is 1,4-dihydroxy-2-naphthoyl-CoA hydrolase, found in Synechococcus sp. (strain RCC307).